The primary structure comprises 123 residues: Large ribosomal subunit protein uL18 (123 aa).

This sequence belongs to the universal ribosomal protein uL18 family. As to quaternary structure, part of the 50S ribosomal subunit; part of the 5S rRNA/L5/L18/L25 subcomplex. Contacts the 5S and 23S rRNAs.

This is one of the proteins that bind and probably mediate the attachment of the 5S RNA into the large ribosomal subunit, where it forms part of the central protuberance. In Bifidobacterium longum (strain DJO10A), this protein is Large ribosomal subunit protein uL18.